A 573-amino-acid polypeptide reads, in one-letter code: Developmental and secondary metabolism regulator veA (573 aa).

Pro residues predominate over residues 1-11 (MATLAAPPPPL). 2 disordered regions span residues 1 to 24 (MATLAAPPPPLGESGNSNSVSRIT) and 39 to 63 (QPKRARACGQGSKSHTDRRPVDPPP). A Velvet domain is found at 27–230 (GKKITYKLNI…AEQGCRVRIR (204 aa)). The Nuclear localization signal signature appears at 41-46 (KRARAC). Phosphothreonine is present on residues Thr-167 and Thr-170. Position 183 is a phosphoserine (Ser-183). Disordered regions lie at residues 236 to 295 (RRRG…RRPS), 307 to 367 (YQRP…SYQS), and 384 to 573 (SHIP…ATMR). Residues 241-260 (KRTEDYDYDNERGYNNRRPD) are compositionally biased toward basic and acidic residues. Tyr-254 carries the post-translational modification Phosphotyrosine. 2 stretches are compositionally biased toward pro residues: residues 318–339 (SSTPIPAPIPMPGPVALPPSTP) and 347–361 (PAPPSVPLAAPPPLH). Over residues 387 to 412 (PQQTTTPTHPYSPRSSISHSRNQSIS) the composition is skewed to low complexity. A compositionally biased stretch (polar residues) spans 452-493 (PSVNSRSKTPSNMITSLPPIQSLSELPSTTSQPSSAIGSSPA). The tract at residues 459-498 (KTPSNMITSLPPIQSLSELPSTTSQPSSAIGSSPANEPGP) is PEST. Basic and acidic residues predominate over residues 510–522 (RTYEESFGHDDRP).

The protein belongs to the velvet family. VeA subfamily. As to quaternary structure, component of the heterotrimeric velvet complex composed of laeA, veA and velB; VeA acting as a bridging protein between laeA and velB. Interacts with the light-sensing phytochrome fphA. Interacts with llmF. Phosphorylated at Thr-167, Thr-170, Ser-183 and Tyr-254. Thr-167 should be phosphorylated and T170 and S183 should be dephosphorylated to achieve light induction of conidiation. Phosphorylation of Ser-183 and Tyr-254 influence sterigmatocystin production in a light-independent manner. Phosphorylation of Thr-167 and Thr-170 modulates expression of veA.

It localises to the nucleus. It is found in the cytoplasm. Functionally, component of the velvet transcription factor complex that controls sexual/asexual developmental ratio in response to light, promoting sexual development in the darkness while stimulating asexual sporulation under illumination. The velvet complex acts as a global regulator for secondary metabolite gene expression. Controls the expression of the sterigmatocystin and penicillin gene clusters. Represses the cryptic ors gene cluster producing orsellinic acid and its F9775 derivatives in a laeA-independent manner. Required for full induction of faoA gene expression by fructosyl amines. Positively regulates the expression of the early sexual development gene esdC. Controls the expression of mannoprotein mnpA. The polypeptide is Developmental and secondary metabolism regulator veA (Emericella nidulans (strain FGSC A4 / ATCC 38163 / CBS 112.46 / NRRL 194 / M139) (Aspergillus nidulans)).